Here is a 417-residue protein sequence, read N- to C-terminus: Serine--tRNA ligase (417 aa).

Position 224–226 (224–226) interacts with L-serine; that stretch reads TSE. ATP-binding positions include 255–257 and Val-271; that span reads RRE. Glu-278 is an L-serine binding site. 342–345 provides a ligand contact to ATP; sequence ELTS. Thr-377 lines the L-serine pocket.

It belongs to the class-II aminoacyl-tRNA synthetase family. Type-1 seryl-tRNA synthetase subfamily. In terms of assembly, homodimer. The tRNA molecule binds across the dimer.

The protein localises to the cytoplasm. The catalysed reaction is tRNA(Ser) + L-serine + ATP = L-seryl-tRNA(Ser) + AMP + diphosphate + H(+). It catalyses the reaction tRNA(Sec) + L-serine + ATP = L-seryl-tRNA(Sec) + AMP + diphosphate + H(+). It participates in aminoacyl-tRNA biosynthesis; selenocysteinyl-tRNA(Sec) biosynthesis; L-seryl-tRNA(Sec) from L-serine and tRNA(Sec): step 1/1. In terms of biological role, catalyzes the attachment of serine to tRNA(Ser). Is also able to aminoacylate tRNA(Sec) with serine, to form the misacylated tRNA L-seryl-tRNA(Sec), which will be further converted into selenocysteinyl-tRNA(Sec). The protein is Serine--tRNA ligase of Mycobacterium leprae (strain TN).